We begin with the raw amino-acid sequence, 233 residues long: Phosphatidylserine decarboxylase proenzyme (233 aa).

Residue Ser201 is the Schiff-base intermediate with substrate; via pyruvic acid of the active site. Ser201 carries the post-translational modification Pyruvic acid (Ser); by autocatalysis.

The protein belongs to the phosphatidylserine decarboxylase family. PSD-A subfamily. In terms of assembly, heterodimer of a large membrane-associated beta subunit and a small pyruvoyl-containing alpha subunit. Pyruvate is required as a cofactor. Post-translationally, is synthesized initially as an inactive proenzyme. Formation of the active enzyme involves a self-maturation process in which the active site pyruvoyl group is generated from an internal serine residue via an autocatalytic post-translational modification. Two non-identical subunits are generated from the proenzyme in this reaction, and the pyruvate is formed at the N-terminus of the alpha chain, which is derived from the carboxyl end of the proenzyme. The post-translation cleavage follows an unusual pathway, termed non-hydrolytic serinolysis, in which the side chain hydroxyl group of the serine supplies its oxygen atom to form the C-terminus of the beta chain, while the remainder of the serine residue undergoes an oxidative deamination to produce ammonia and the pyruvoyl prosthetic group on the alpha chain.

It localises to the cell membrane. It catalyses the reaction a 1,2-diacyl-sn-glycero-3-phospho-L-serine + H(+) = a 1,2-diacyl-sn-glycero-3-phosphoethanolamine + CO2. It functions in the pathway phospholipid metabolism; phosphatidylethanolamine biosynthesis; phosphatidylethanolamine from CDP-diacylglycerol: step 2/2. Its function is as follows. Catalyzes the formation of phosphatidylethanolamine (PtdEtn) from phosphatidylserine (PtdSer). This chain is Phosphatidylserine decarboxylase proenzyme, found in Mycolicibacterium vanbaalenii (strain DSM 7251 / JCM 13017 / BCRC 16820 / KCTC 9966 / NRRL B-24157 / PYR-1) (Mycobacterium vanbaalenii).